Consider the following 215-residue polypeptide: Methylthioribulose-1-phosphate dehydratase (215 aa).

The Zn(2+) site is built by His-103 and His-105.

The protein belongs to the aldolase class II family. MtnB subfamily. The cofactor is Zn(2+).

It carries out the reaction 5-(methylsulfanyl)-D-ribulose 1-phosphate = 5-methylsulfanyl-2,3-dioxopentyl phosphate + H2O. It participates in amino-acid biosynthesis; L-methionine biosynthesis via salvage pathway; L-methionine from S-methyl-5-thio-alpha-D-ribose 1-phosphate: step 2/6. In terms of biological role, catalyzes the dehydration of methylthioribulose-1-phosphate (MTRu-1-P) into 2,3-diketo-5-methylthiopentyl-1-phosphate (DK-MTP-1-P). This Sulfurihydrogenibium sp. (strain YO3AOP1) protein is Methylthioribulose-1-phosphate dehydratase.